The chain runs to 349 residues: Bifunctional nitrilase/nitrile hydratase NIT4A (349 aa).

Residues 29 to 301 form the CN hydrolase domain; the sequence is VRATVVQAST…EALISADLDL (273 aa). The active-site Proton acceptor is E69. The Proton donor role is filled by K156. The active-site Nucleophile is the C190.

Belongs to the carbon-nitrogen hydrolase superfamily. Nitrilase family. Expressed in roots, stems, cotyledons, leaves and flowers.

It localises to the cell membrane. It catalyses the reaction a nitrile + 2 H2O = a carboxylate + NH4(+). It carries out the reaction 3-cyano-L-alanine + 2 H2O = L-aspartate + NH4(+). The catalysed reaction is L-asparagine = 3-cyano-L-alanine + H2O. In terms of biological role, highly specific for beta-cyano-L-alanine (Ala(CN)). Low activity with 3-phenylpropionitrile (PPN). Not associated with auxin production but may be involved in cyanide detoxification. This Nicotiana tabacum (Common tobacco) protein is Bifunctional nitrilase/nitrile hydratase NIT4A (NIT4A).